Here is a 309-residue protein sequence, read N- to C-terminus: Olfactory receptor 7A40 (309 aa).

The Extracellular portion of the chain corresponds to 1-26; it reads MELKNDTQISKFILLGISEDPLWQPF. Residue Asn-5 is glycosylated (N-linked (GlcNAc...) asparagine). Residues 27–47 form a helical membrane-spanning segment; sequence LFGLFLFMYLVTLLGNLLIII. The Cytoplasmic portion of the chain corresponds to 48–57; it reads ATITDSHLHT. Residues 58 to 78 traverse the membrane as a helical segment; that stretch reads PMYFFLSNLSFADICFTSASI. The Extracellular portion of the chain corresponds to 79–97; the sequence is PKMLVNIQTKNKVITYEGC. Cys-97 and Cys-179 are oxidised to a cystine. The chain crosses the membrane as a helical span at residues 98–118; it reads ISQVFFFILFGVLDNFLLAVM. At 119–139 the chain is on the cytoplasmic side; sequence AYDRYVAICHPLHYMVIMNCR. The helical transmembrane segment at 140–160 threads the bilayer; that stretch reads LCGFLVLGSWVTTALNSLLQS. Residues 161–196 are Extracellular-facing; the sequence is SMALRLSFCTDLKIPHFVCELNQLVLLACNDTFPND. The helical transmembrane segment at 197-217 threads the bilayer; sequence MVMYFAAILLGGGPLAGILYS. At 218-244 the chain is on the cytoplasmic side; sequence YSKIVSSIRAISSSQGKYKAFSTCASH. The chain crosses the membrane as a helical span at residues 245 to 265; sequence LSVVSLFYSTLLGVYLSSSFT. At 266–269 the chain is on the extracellular side; that stretch reads QNSH. A helical membrane pass occupies residues 270-292; that stretch reads STARASVMYSVVTPMLNPFIYSL. Over 293–309 the chain is Cytoplasmic; it reads RNKDLMGALRRLLRRKS.

It belongs to the G-protein coupled receptor 1 family.

Its subcellular location is the cell membrane. In terms of biological role, odorant receptor. The sequence is that of Olfactory receptor 7A40 from Mus musculus (Mouse).